The chain runs to 511 residues: MATPLRYALIFLLWAMVAVIYAPLIPAALTLISPALSLTHWQALFADPQLPQALLATLVSTTIAAVGALLIALLVIVALWPGPKWQRMCARLPWLLAIPHVAFATSALLLFADGGLLYDYFPYFTPPMDRFGIGLGLTLAVKESAFLLWILAAVLSEKWLLQQVIVLDSLGYSRWQCLNWLLLPSVAPALAMAMLAIVAWSLSVVDVAIILGPGNPPTLAVISWQWLTQGDIDQQTKGALASLLLMLLLAAYVLLSYLLWRSWRRTIPRVDGVRKPATPLLPGNTLAIFLPLTGVLCVVLLAILADQSTINSEALINSLTMGLVATFIALLLLLLWLEWGPQRRQLWLWLPILLPALPLVAGQYTLALWLKLDGSWTAVVWGHLLWVMPWMLFILQPAWQRIDSRLILIAQTLGWSRAKIFFYVKCPLMLRPVLIAFAVGFAVGIAQYMPTLWLGAGRFPTLTTEAVALSSGGSNGILAAQALWQLLLPLIIFALTALVAKWVGYVRQGLR.

The Cytoplasmic segment spans residues 1-8; it reads MATPLRYA. Residues 9 to 29 form a helical membrane-spanning segment; sequence LIFLLWAMVAVIYAPLIPAAL. Topologically, residues 30 to 62 are periplasmic; sequence TLISPALSLTHWQALFADPQLPQALLATLVSTT. The ABC transmembrane type-1 1 domain occupies 54 to 255; that stretch reads LLATLVSTTI…MLLLAAYVLL (202 aa). A helical membrane pass occupies residues 63–83; that stretch reads IAAVGALLIALLVIVALWPGP. At 84–91 the chain is on the cytoplasmic side; it reads KWQRMCAR. A helical membrane pass occupies residues 92–112; sequence LPWLLAIPHVAFATSALLLFA. Residues 113 to 130 are Periplasmic-facing; it reads DGGLLYDYFPYFTPPMDR. A helical membrane pass occupies residues 131–151; it reads FGIGLGLTLAVKESAFLLWIL. Residues 152-189 are Cytoplasmic-facing; the sequence is AAVLSEKWLLQQVIVLDSLGYSRWQCLNWLLLPSVAPA. Residues 190–210 traverse the membrane as a helical segment; it reads LAMAMLAIVAWSLSVVDVAII. Residues 211–239 are Periplasmic-facing; it reads LGPGNPPTLAVISWQWLTQGDIDQQTKGA. The chain crosses the membrane as a helical span at residues 240–260; it reads LASLLLMLLLAAYVLLSYLLW. The Cytoplasmic portion of the chain corresponds to 261–284; sequence RSWRRTIPRVDGVRKPATPLLPGN. The chain crosses the membrane as a helical span at residues 285–305; it reads TLAIFLPLTGVLCVVLLAILA. Topologically, residues 306–318 are periplasmic; it reads DQSTINSEALINS. The ABC transmembrane type-1 2 domain maps to 315-496; that stretch reads LINSLTMGLV…LLPLIIFALT (182 aa). The chain crosses the membrane as a helical span at residues 319–339; that stretch reads LTMGLVATFIALLLLLLWLEW. Topologically, residues 340–345 are cytoplasmic; that stretch reads GPQRRQ. The chain crosses the membrane as a helical span at residues 346-366; it reads LWLWLPILLPALPLVAGQYTL. The Periplasmic portion of the chain corresponds to 367–374; sequence ALWLKLDG. Residues 375–395 form a helical membrane-spanning segment; that stretch reads SWTAVVWGHLLWVMPWMLFIL. Topologically, residues 396 to 432 are cytoplasmic; it reads QPAWQRIDSRLILIAQTLGWSRAKIFFYVKCPLMLRP. A helical transmembrane segment spans residues 433–453; sequence VLIAFAVGFAVGIAQYMPTLW. At 454–485 the chain is on the periplasmic side; the sequence is LGAGRFPTLTTEAVALSSGGSNGILAAQALWQ. Residues 486–506 form a helical membrane-spanning segment; the sequence is LLLPLIIFALTALVAKWVGYV. The Cytoplasmic portion of the chain corresponds to 507–511; it reads RQGLR.

It belongs to the binding-protein-dependent transport system permease family.

The protein resides in the cell inner membrane. Functionally, probably part of the binding-protein-dependent transport system YnjCD. Probably responsible for the translocation of the substrate across the membrane. The chain is Inner membrane ABC transporter permease protein YnjC (ynjC) from Escherichia coli (strain K12).